A 64-amino-acid polypeptide reads, in one-letter code: Large ribosomal subunit protein bL28 (64 aa).

This sequence belongs to the bacterial ribosomal protein bL28 family.

The polypeptide is Large ribosomal subunit protein bL28 (Elusimicrobium minutum (strain Pei191)).